A 190-amino-acid polypeptide reads, in one-letter code: MSIKSDRWIRRMSEQHGMIEPFEAGQVKQANGERIVSYGTSSYGYDVRCSREFKVFTNINSTIVDPKHFDSGSFVDITADECIIPPNSFALARTVEYFRIPRDTLVVCLGKSTYARCGIIVNVTPLEPEWEGHVTLEFSNTTPLPARIYANEGVAQMLFFQAAADDICETSYRDRGGKYQGQTGVTLPRT.

Residues 111-116, 135-137, Gln156, Tyr172, and Gln182 each bind dCTP; these read KSTYAR and TLE. Glu137 functions as the Proton donor/acceptor in the catalytic mechanism.

Belongs to the dCTP deaminase family. In terms of assembly, homotrimer.

The enzyme catalyses dCTP + H2O + H(+) = dUTP + NH4(+). It functions in the pathway pyrimidine metabolism; dUMP biosynthesis; dUMP from dCTP (dUTP route): step 1/2. In terms of biological role, catalyzes the deamination of dCTP to dUTP. The protein is dCTP deaminase of Stenotrophomonas maltophilia (strain K279a).